The chain runs to 381 residues: Tumor necrosis factor receptor superfamily member 10B (381 aa).

Positions 1–52 are cleaved as a signal peptide; it reads MEPPGPSTPTASAAARADHYTPGLRPLPKRRLLYSFALLLAVLQAVFVPVTA. TNFR-Cys repeat units lie at residues 26–86, 87–129, and 130–169; these read PLPK…GNCK, PCRE…NTVC, and RCKP…NRKC. Residues 53–180 are Extracellular-facing; sequence NPAHNRPAGL…SKTAWASWHK (128 aa). 7 cysteine pairs are disulfide-bonded: C74/C85, C88/C105, C108/C121, C111/C129, C131/C145, C148/C161, and C151/C169. Residues 181–201 form a helical membrane-spanning segment; that stretch reads LGLWIGLLVPVVLLIGALLVW. Residues 202–381 are Cytoplasmic-facing; the sequence is KTGAWRQWLL…ETGPGGSQCV (180 aa). Positions 228–260 are disordered; that stretch reads HSSLLDRQTSSTTNDSNHNTEPGKTQKTGKKLL. A compositionally biased stretch (low complexity) spans 236-247; that stretch reads TSSTTNDSNHNT. Residues 273-356 enclose the Death domain; that stretch reads KFIFEYCSDI…DAMEKIEDYA (84 aa). A (Microbial infection) N-beta-linked (GlcNAc) arginine glycan is attached at R293.

As to quaternary structure, monomer. Can interact with TRADD and RIPK1. Three TNFRSF10B molecules interact with the TNFSF10 homotrimer. In the absence of stimulation, interacts with BIRC2, DDX3X and GSK3B. The interaction with BIRC2 and DDX3X is further enhanced upon receptor stimulation and accompanied by DDX3X and BIRC2 cleavage. Post-translationally, (Microbial infection) Glycosylated at Arg-293 by S.typhimurium protein Ssek3. In terms of tissue distribution, highly expressed in heart, lung and kidney.

Its subcellular location is the membrane. Functionally, receptor for the cytotoxic ligand TNFSF10/TRAIL. The adapter molecule FADD recruits caspase-8 to the activated receptor. The resulting death-inducing signaling complex (DISC) performs caspase-8 proteolytic activation which initiates the subsequent cascade of caspases (aspartate-specific cysteine proteases) mediating apoptosis. Promotes the activation of NF-kappa-B. Essential for ER stress-induced apoptosis. The protein is Tumor necrosis factor receptor superfamily member 10B (Tnfrsf10b) of Mus musculus (Mouse).